A 312-amino-acid chain; its full sequence is Taste receptor type 2 member 7 (312 aa).

At 1–9 the chain is on the extracellular side; the sequence is MTYETDTTL. A helical membrane pass occupies residues 10–30; sequence MLVAVGEALVGILGNAFIALV. Residues 31 to 49 are Cytoplasmic-facing; that stretch reads NFMGWMKNRKIASIDLILS. The chain crosses the membrane as a helical span at residues 50–70; it reads SVAMSRICLQCIILLDCIILV. The Extracellular portion of the chain corresponds to 71-101; that stretch reads QYPDTYNRGKEMRTVDFFWTLTNHLSVWFAT. The chain crosses the membrane as a helical span at residues 102-122; that stretch reads CLSIFYLFKIANFFHPLFLWI. Residues 123 to 128 are Cytoplasmic-facing; the sequence is KWRIDK. The helical transmembrane segment at 129–149 threads the bilayer; it reads LILRTLLACVIISLCFSLPVT. Over 150–187 the chain is Extracellular; that stretch reads ENLSDDFRRCVKTKERINSTLRCKVNKAGHASVKVNLN. Residues Asn151 and Asn167 are each glycosylated (N-linked (GlcNAc...) asparagine). The chain crosses the membrane as a helical span at residues 188–208; that stretch reads LVMLFPFSVSLVSFLLLILSL. The Cytoplasmic segment spans residues 209-235; sequence WRHTRQIQLSVTGYKDPSTTAHVKAMK. A helical membrane pass occupies residues 236–256; the sequence is AVISFLALFVVYCLAFLIATS. Over 257–266 the chain is Extracellular; it reads SYFMPESELA. A helical transmembrane segment spans residues 267–287; the sequence is VIWGELIALIYPSSHSFILIL. At 288-312 the chain is on the cytoplasmic side; the sequence is GSSKLKQASVRVLCRVKTMLKGKKY.

This sequence belongs to the G-protein coupled receptor T2R family. As to expression, expressed in subsets of taste receptor cells of the tongue and palate epithelium and exclusively in gustducin-positive cells. Expressed in 15% taste bud cells in circumvallate and foliate papillae but only in 2% in fungiform papillae. Expressed in gastric and duodenal tissues.

The protein localises to the membrane. In terms of biological role, gustducin-coupled receptor implicated in the perception of bitter compounds in the oral cavity and the gastrointestinal tract. Signals through PLCB2 and the calcium-regulated cation channel TRPM5. The polypeptide is Taste receptor type 2 member 7 (Tas2r7) (Mus musculus (Mouse)).